The sequence spans 178 residues: Large ribosomal subunit protein uL6 (178 aa).

This sequence belongs to the universal ribosomal protein uL6 family. As to quaternary structure, part of the 50S ribosomal subunit.

In terms of biological role, this protein binds to the 23S rRNA, and is important in its secondary structure. It is located near the subunit interface in the base of the L7/L12 stalk, and near the tRNA binding site of the peptidyltransferase center. The sequence is that of Large ribosomal subunit protein uL6 from Halobacterium salinarum (strain ATCC 700922 / JCM 11081 / NRC-1) (Halobacterium halobium).